A 200-amino-acid chain; its full sequence is TATA-box-binding protein 1 (200 aa).

T2 carries the N-acetylthreonine modification. Repeat copies occupy residues 25 to 101 and 115 to 192.

This sequence belongs to the TBP family. As to quaternary structure, belongs to the TFIID complex together with the TBP-associated factors (TAFs). Binds DNA as monomer. Interacts with TAF1 (via N-terminus). Interacts with MEE12/CCG1. Associates with PWP2 in the nucleus. Component of a nuclear protein complex containing at least TATA binding proteins (TBPs, e.g. TBP1 and TBP2) and ATX1.

The protein localises to the nucleus. General transcription factor that functions at the core of the DNA-binding multiprotein factor TFIID. Binding of TFIID to the TATA box is the initial transcriptional step of the pre-initiation complex (PIC), playing a role in the activation of eukaryotic genes transcribed by RNA polymerase II. The protein is TATA-box-binding protein 1 of Arabidopsis thaliana (Mouse-ear cress).